Reading from the N-terminus, the 146-residue chain is Leptin (146 aa).

Cys96 and Cys146 are disulfide-bonded.

Belongs to the leptin family.

Its subcellular location is the secreted. Its function is as follows. Key player in the regulation of energy balance and body weight control. Once released into the circulation, has central and peripheral effects by binding LEPR, found in many tissues, which results in the activation of several major signaling pathways. In the hypothalamus, acts as an appetite-regulating factor that induces a decrease in food intake and an increase in energy consumption by inducing anorexinogenic factors and suppressing orexigenic neuropeptides, also regulates bone mass and secretion of hypothalamo-pituitary-adrenal hormones. In the periphery, increases basal metabolism, influences reproductive function, regulates pancreatic beta-cell function and insulin secretion, is pro-angiogenic for endothelial cell and affects innate and adaptive immunity. In the arcuate nucleus of the hypothalamus, activates by depolarization POMC neurons inducing FOS and SOCS3 expression to release anorexigenic peptides and inhibits by hyperpolarization NPY neurons inducing SOCS3 with a consequent reduction on release of orexigenic peptides. In addition to its known satiety inducing effect, has a modulatory role in nutrient absorption. In the intestine, reduces glucose absorption by enterocytes by activating PKC and leading to a sequential activation of p38, PI3K and ERK signaling pathways which exerts an inhibitory effect on glucose absorption. Acts as a growth factor on certain tissues, through the activation of different signaling pathways increases expression of genes involved in cell cycle regulation such as CCND1, via JAK2-STAT3 pathway, or VEGFA, via MAPK1/3 and PI3K-AKT1 pathways. May also play an apoptotic role via JAK2-STAT3 pathway and up-regulation of BIRC5 expression. Pro-angiogenic, has mitogenic activity on vascular endothelial cells and plays a role in matrix remodeling by regulating the expression of matrix metalloproteinases (MMPs) and tissue inhibitors of metalloproteinases (TIMPs). In innate immunity, modulates the activity and function of neutrophils by increasing chemotaxis and the secretion of oxygen radicals. Increases phagocytosis by macrophages and enhances secretion of pro-inflammatory mediators. Increases cytotoxic ability of NK cells. Plays a pro-inflammatory role, in synergy with IL1B, by inducing NOS2 which promotes the production of IL6, IL8 and Prostaglandin E2, through a signaling pathway that involves JAK2, PI3K, MAP2K1/MEK1 and MAPK14/p38. In adaptive immunity, promotes the switch of memory T-cells towards T helper-1 cell immune responses. Increases CD4(+)CD25(-) T-cell proliferation and reduces autophagy during TCR (T-cell receptor) stimulation, through MTOR signaling pathway activation and BCL2 up-regulation. The polypeptide is Leptin (LEP) (Pongo pygmaeus (Bornean orangutan)).